Consider the following 242-residue polypeptide: DNA repair protein RecO (242 aa).

This sequence belongs to the RecO family. In terms of assembly, monomer.

Functionally, involved in DNA repair and RecF pathway recombination. This Salmonella gallinarum (strain 287/91 / NCTC 13346) protein is DNA repair protein RecO.